We begin with the raw amino-acid sequence, 158 residues long: Naphthalene 1,2-dioxygenase system, small oxygenase component (158 aa).

The protein belongs to the bacterial ring-hydroxylating dioxygenase beta subunit family. The naphthalene dioxygenase (NDO) multicomponent enzyme system is composed of an electron transfer component and a dioxygenase component (iron sulfur protein (ISP)). The electron transfer component is composed of a ferredoxin reductase (NdoR) and a ferredoxin (NdoA), and the dioxygenase component is formed of a heterohexamer (trimer of heterodimers) of three large alpha subunits (NdoB) and three small beta subunits (NdoC).

The protein operates within aromatic compound metabolism; naphthalene degradation. Functionally, component of the naphthalene dioxygenase (NDO) multicomponent enzyme system which catalyzes the incorporation of both atoms of molecular oxygen into naphthalene to form cis-(1R,2S)-dihydroxy-1,2-dihydronaphthalene. The beta subunit seems to have a structural role in the holoenzyme. The sequence is that of Naphthalene 1,2-dioxygenase system, small oxygenase component from Pseudomonas fluorescens.